The following is a 593-amino-acid chain: Arginine--tRNA ligase (593 aa).

A 'HIGH' region motif is present at residues 138 to 148; the sequence is ANPTGPLHVGH.

The protein belongs to the class-I aminoacyl-tRNA synthetase family. As to quaternary structure, monomer.

The protein localises to the cytoplasm. The enzyme catalyses tRNA(Arg) + L-arginine + ATP = L-arginyl-tRNA(Arg) + AMP + diphosphate. This Burkholderia cenocepacia (strain ATCC BAA-245 / DSM 16553 / LMG 16656 / NCTC 13227 / J2315 / CF5610) (Burkholderia cepacia (strain J2315)) protein is Arginine--tRNA ligase.